Consider the following 933-residue polypeptide: Serine/threonine-protein kinase EDR1 (933 aa).

The segment covering 1–10 (MKHIFKKLHR) has biased composition (basic residues). Disordered stretches follow at residues 1–74 (MKHI…ADYM), 342–424 (CNSN…TAIG), 527–550 (HRDP…AISS), and 604–650 (HGQQ…YRND). Polar residues predominate over residues 37-48 (NPPQATPSSVTE). Residues 53 to 68 (AGATSSMASPAPTAAS) are compositionally biased toward low complexity. Polar residues predominate over residues 342 to 356 (CNSNGNKFPTAQFSN). Residues 367–378 (SSHSSMANYSSS) are compositionally biased toward low complexity. A compositionally biased stretch (basic and acidic residues) spans 379 to 389 (LDRRTEAERTD). The segment covering 404-413 (SSPSSVTSST) has biased composition (low complexity). The span at 533 to 550 (GNTQSSYATSSSNGAISS) shows a compositional bias: polar residues. Over residues 607 to 621 (QNDESHIHDHRKYTS) the composition is skewed to basic and acidic residues. Positions 669–925 (LVIAERIGLG…QLTEVLKPLN (257 aa)) constitute a Protein kinase domain. ATP contacts are provided by residues 675–683 (IGLGSYGEV) and K696. D792 serves as the catalytic Proton acceptor.

This sequence belongs to the protein kinase superfamily. TKL Ser/Thr protein kinase family. RAF subfamily. In terms of assembly, interacts with KEG. Binds and recruited by EDR4 at the powdery mildew (e.g. G.cichoracearum) penetration site on the plasma membrane. Post-translationally, autophosphorylated.

The protein localises to the cell membrane. It is found in the endosome. Its subcellular location is the nucleus. The protein resides in the endoplasmic reticulum. It localises to the golgi apparatus. The protein localises to the trans-Golgi network. It is found in the early endosome. The enzyme catalyses L-seryl-[protein] + ATP = O-phospho-L-seryl-[protein] + ADP + H(+). It carries out the reaction L-threonyl-[protein] + ATP = O-phospho-L-threonyl-[protein] + ADP + H(+). Functionally, MAPKKK serine/threonine-protein kinase involved in the regulation of a MAP kinase cascade (probably including MPK3 and MPK6) that negatively regulates salicylic acid- (SA-) dependent defense responses, abscisic acid (ABA) signaling, and ethylene-induced senescence. Also modulates stress response (e.g. drought) signaling and cell death, in an ORE9-dependent manner. Functions at a point of cross talk between ethylene, ABA and SA signaling that impinges on senescence and cell death. On the other hand, it confers sensitivity to various pathogens such as the fungus E.cichoracearum, the oomycete H.parasitica and the bacteria P.syringae pv. tomato DC3000. Required for resistance to some hemibiotrophic/necrotrophic fungal pathogens (e.g. C.gloeosporioides, C.higginsianum and A.brassicicola) through the induction of defensin expression, probably by repressing MYC2, an inhibitor of defensin genes (PDFs). Together with KEG, may regulate endocytic trafficking and/or the formation of signaling complexes on trans-Golgi network (TGN)/ early endosome (EE) vesicles during stress responses. In Arabidopsis thaliana (Mouse-ear cress), this protein is Serine/threonine-protein kinase EDR1 (EDR1).